We begin with the raw amino-acid sequence, 263 residues long: P29 (263 aa).

Residues 30–39 (VPEGLRDISK) show a composition bias toward basic and acidic residues. Residues 30–93 (VPEGLRDISK…PKQKQLAPPI (64 aa)) are disordered. A compositionally biased stretch (polar residues) spans 52 to 64 (LSRASARPQQLQP).

This chain is P29 (p29), found in Citrus sinensis (Sweet orange).